A 147-amino-acid polypeptide reads, in one-letter code: Ribonuclease VapC43 (147 aa).

The PINc domain occupies 3–139 (CVDVNVLVYA…ARFRRLRWRH (137 aa)). Mg(2+)-binding residues include aspartate 5 and aspartate 108.

This sequence belongs to the PINc/VapC protein family. Mg(2+) serves as cofactor.

Its function is as follows. Toxic component of a type II toxin-antitoxin (TA) system. An RNase. Its toxic effect is neutralized by coexpression with cognate antitoxin VapB43. This chain is Ribonuclease VapC43, found in Mycobacterium tuberculosis (strain CDC 1551 / Oshkosh).